A 241-amino-acid polypeptide reads, in one-letter code: Phosphoribosylformylglycinamidine synthase subunit PurQ (241 aa).

The Glutamine amidotransferase type-1 domain maps to N6–A241. The active-site Nucleophile is the C90. Residues H207 and E209 contribute to the active site.

As to quaternary structure, part of the FGAM synthase complex composed of 1 PurL, 1 PurQ and 2 PurS subunits.

It is found in the cytoplasm. The enzyme catalyses N(2)-formyl-N(1)-(5-phospho-beta-D-ribosyl)glycinamide + L-glutamine + ATP + H2O = 2-formamido-N(1)-(5-O-phospho-beta-D-ribosyl)acetamidine + L-glutamate + ADP + phosphate + H(+). It carries out the reaction L-glutamine + H2O = L-glutamate + NH4(+). Its pathway is purine metabolism; IMP biosynthesis via de novo pathway; 5-amino-1-(5-phospho-D-ribosyl)imidazole from N(2)-formyl-N(1)-(5-phospho-D-ribosyl)glycinamide: step 1/2. Part of the phosphoribosylformylglycinamidine synthase complex involved in the purines biosynthetic pathway. Catalyzes the ATP-dependent conversion of formylglycinamide ribonucleotide (FGAR) and glutamine to yield formylglycinamidine ribonucleotide (FGAM) and glutamate. The FGAM synthase complex is composed of three subunits. PurQ produces an ammonia molecule by converting glutamine to glutamate. PurL transfers the ammonia molecule to FGAR to form FGAM in an ATP-dependent manner. PurS interacts with PurQ and PurL and is thought to assist in the transfer of the ammonia molecule from PurQ to PurL. This chain is Phosphoribosylformylglycinamidine synthase subunit PurQ, found in Thermosynechococcus vestitus (strain NIES-2133 / IAM M-273 / BP-1).